The following is an 896-amino-acid chain: Protein translocase subunit SecA (896 aa).

ATP is bound by residues Gln-87, 105 to 109 (GEGKT), and Asp-512. Disordered regions lie at residues 565–584 (RRID…PGSS) and 840–896 (EAAQ…AHEA). Positions 876, 878, 887, and 888 each coordinate Zn(2+). Residues 882–896 (KKYKHCHGNRAAHEA) are compositionally biased toward basic residues.

This sequence belongs to the SecA family. In terms of assembly, monomer and homodimer. Part of the essential Sec protein translocation apparatus which comprises SecA, SecYEG and auxiliary proteins SecDF-YajC and YidC. Requires Zn(2+) as cofactor.

Its subcellular location is the cell inner membrane. The protein resides in the cytoplasm. The enzyme catalyses ATP + H2O + cellular proteinSide 1 = ADP + phosphate + cellular proteinSide 2.. Its function is as follows. Part of the Sec protein translocase complex. Interacts with the SecYEG preprotein conducting channel. Has a central role in coupling the hydrolysis of ATP to the transfer of proteins into and across the cell membrane, serving both as a receptor for the preprotein-SecB complex and as an ATP-driven molecular motor driving the stepwise translocation of polypeptide chains across the membrane. The chain is Protein translocase subunit SecA from Mannheimia succiniciproducens (strain KCTC 0769BP / MBEL55E).